Consider the following 331-residue polypeptide: Phosphate acyltransferase (331 aa).

This sequence belongs to the PlsX family. As to quaternary structure, homodimer. Probably interacts with PlsY.

It localises to the cytoplasm. It catalyses the reaction a fatty acyl-[ACP] + phosphate = an acyl phosphate + holo-[ACP]. It participates in lipid metabolism; phospholipid metabolism. Catalyzes the reversible formation of acyl-phosphate (acyl-PO(4)) from acyl-[acyl-carrier-protein] (acyl-ACP). This enzyme utilizes acyl-ACP as fatty acyl donor, but not acyl-CoA. This chain is Phosphate acyltransferase, found in Malacoplasma penetrans (strain HF-2) (Mycoplasma penetrans).